Here is a 675-residue protein sequence, read N- to C-terminus: Zinc finger CCCH domain-containing protein 65 (675 aa).

A disordered region spans residues 294–320 (TFSNEAKMDPGTSIKKRSAPSKDAKAR). Residues 307-320 (IKKRSAPSKDAKAR) are compositionally biased toward basic residues. Residues 314–342 (SKDAKARKRAKARIKRAQERIALGVKKLK) are a coiled coil. C3H1-type zinc fingers lie at residues 350 to 377 (PKPIKYCRHYLKGRCHEGDKCKFSHDTI), 384 to 406 (PCCYFATQSCMKGDDCPFDHDLS), and 409 to 432 (PCNNFITKGFCYRGDSCLFSHKGT). Disordered stretches follow at residues 487–572 (LKPS…LPLG) and 586–612 (EQKTLNREPQKPASSKNLKTTPSSHIQ). The span at 490-504 (SSHSNQRNSSDASSS) shows a compositional bias: low complexity. A compositionally biased stretch (polar residues) spans 543–567 (KASSASKPNTDNSDSQTLKQSQQGS). The span at 586-595 (EQKTLNREPQ) shows a compositional bias: basic and acidic residues. Residues 597–612 (PASSKNLKTTPSSHIQ) show a composition bias toward polar residues.

Functionally, possesses RNA-binding and ribonuclease activities in vitro. This is Zinc finger CCCH domain-containing protein 65 (EMB1789) from Arabidopsis thaliana (Mouse-ear cress).